We begin with the raw amino-acid sequence, 164 residues long: Magnesium-dependent phosphatase 1 (164 aa).

Asp-11 serves as the catalytic Nucleophile. Asp-11 contacts Mg(2+). Phosphate contacts are provided by Leu-12 and Asp-13. Residue Asp-13 participates in Mg(2+) binding. The active-site Proton donor is Asp-13. Residue Trp-20 coordinates substrate. Residues Ser-69, Arg-70, and Lys-100 each contribute to the phosphate site. Arg-70 is a binding site for substrate. Residue Asp-123 coordinates Mg(2+).

It belongs to the HAD-like hydrolase superfamily. It depends on Mg(2+) as a cofactor.

The catalysed reaction is O-phospho-L-tyrosyl-[protein] + H2O = L-tyrosyl-[protein] + phosphate. Inhibited by vanadate and zinc, and slightly by calcium. In terms of biological role, magnesium-dependent phosphatase which may act as a tyrosine phosphatase. The chain is Magnesium-dependent phosphatase 1 (Mdp1) from Mus musculus (Mouse).